A 238-amino-acid chain; its full sequence is Histidine/lysine/arginine/ornithine transport system permease protein HisM (238 aa).

The Periplasmic portion of the chain corresponds to 1–26 (MIEILHEYWKPLLWTDGYRFTGVAIT). An ABC transmembrane type-1 domain is found at 23-221 (VAITLWLLIL…IISYVLISLF (199 aa)). The helical transmembrane segment at 27-47 (LWLLILSVVIGGVLALFLAIG) threads the bilayer. Residues 48 to 58 (RVSSNKYIQFP) lie on the Cytoplasmic side of the membrane. Residues 59 to 79 (IWLFTYIFRGTPLYVQLLVFY) traverse the membrane as a helical segment. Residues 80–104 (SGMYTLEIVKGTEFLNAFFRSGLNC) are Periplasmic-facing. A helical membrane pass occupies residues 105-125 (TVLALTLNTCAYTTEIFAGAI). The Cytoplasmic portion of the chain corresponds to 126–157 (RSVPHGEIEAARAYGFSTFKMYRCIILPSALR). The helical transmembrane segment at 158-178 (IALPAYSNEVILMLHSTALAF) threads the bilayer. Over 179 to 199 (TATVPDLLKIARDINAATYQP) the chain is Periplasmic. The helical transmembrane segment at 200 to 220 (FTAFGIAAVLYLIISYVLISL) threads the bilayer. The Cytoplasmic segment spans residues 221 to 238 (FRRAEKRWLQHVKPSSTH).

The protein belongs to the binding-protein-dependent transport system permease family. HisMQ subfamily. As to quaternary structure, the HisPMQJ complex is composed of two ATP-binding proteins (HisP), two transmembrane proteins (HisM and HisQ) and a solute-binding protein (HisJ). The HisPMQ-ArgT complex is composed of two ATP-binding proteins (HisP), two transmembrane proteins (HisM and HisQ) and a solute-binding protein (ArgT).

The protein resides in the cell inner membrane. In terms of biological role, part of the ABC transporter complex HisPMQJ involved in histidine transport. Is also part of the ABC transporter complex HisPMQ-ArgT involved in lysine/arginine/ornithine transport. Probably responsible for the translocation of the substrate across the membrane. The protein is Histidine/lysine/arginine/ornithine transport system permease protein HisM (hisM) of Escherichia coli O157:H7.